A 185-amino-acid chain; its full sequence is Ribosome-recycling factor (185 aa).

Residues 135–159 (ANDEVKKLEKDKAITEDESKKGQDE) are disordered.

It belongs to the RRF family.

It localises to the cytoplasm. Its function is as follows. Responsible for the release of ribosomes from messenger RNA at the termination of protein biosynthesis. May increase the efficiency of translation by recycling ribosomes from one round of translation to another. The protein is Ribosome-recycling factor of Campylobacter curvus (strain 525.92).